The sequence spans 501 residues: Vitamin D 25-hydroxylase (501 aa).

Alanine 250 is a binding site for substrate. Cysteine 448 provides a ligand contact to heme.

This sequence belongs to the cytochrome P450 family. Homodimer. It depends on heme as a cofactor. Highly expressed in the liver and testis.

Its subcellular location is the endoplasmic reticulum membrane. It is found in the microsome membrane. It carries out the reaction calciol + reduced [NADPH--hemoprotein reductase] + O2 = calcidiol + oxidized [NADPH--hemoprotein reductase] + H2O + H(+). The enzyme catalyses vitamin D2 + reduced [NADPH--hemoprotein reductase] + O2 = 25-hydroxyvitamin D2 + oxidized [NADPH--hemoprotein reductase] + H2O + H(+). It catalyses the reaction 1alpha-hydroxyvitamin D2 + reduced [NADPH--hemoprotein reductase] + O2 = 1alpha,25-dihydroxyvitamin D2 + oxidized [NADPH--hemoprotein reductase] + H2O + H(+). The catalysed reaction is alfacalcidol + reduced [NADPH--hemoprotein reductase] + O2 = calcitriol + oxidized [NADPH--hemoprotein reductase] + H2O + H(+). Its pathway is hormone biosynthesis; vitamin D biosynthesis. In terms of biological role, a cytochrome P450 monooxygenase involved in activation of vitamin D precursors. Catalyzes hydroxylation at C-25 of both forms of vitamin D, vitamin D(2) and D(3) (calciol). Can metabolize vitamin D analogs/prodrugs 1alpha-hydroxyvitamin D(2) (doxercalciferol) and 1alpha-hydroxyvitamin D(3) (alfacalcidol) forming 25-hydroxy derivatives. Mechanistically, uses molecular oxygen inserting one oxygen atom into a substrate, and reducing the second into a water molecule, with two electrons provided by NADPH via cytochrome P450 reductase (CPR; NADPH-ferrihemoprotein reductase). The chain is Vitamin D 25-hydroxylase (Cyp2r1) from Mus musculus (Mouse).